A 255-amino-acid polypeptide reads, in one-letter code: Adenosylcobinamide-GDP ribazoletransferase (255 aa).

Helical transmembrane passes span 24 to 44 (LIAY…SLYV), 45 to 65 (AIYG…IYIV), 98 to 118 (VGAG…ISLS), 122 to 142 (LYIG…MMMI), 164 to 184 (KHDS…ALLS), and 187 to 207 (SIMI…MAVI).

This sequence belongs to the CobS family. The cofactor is Mg(2+).

The protein localises to the cell membrane. The catalysed reaction is alpha-ribazole + adenosylcob(III)inamide-GDP = adenosylcob(III)alamin + GMP + H(+). It catalyses the reaction alpha-ribazole 5'-phosphate + adenosylcob(III)inamide-GDP = adenosylcob(III)alamin 5'-phosphate + GMP + H(+). It participates in cofactor biosynthesis; adenosylcobalamin biosynthesis; adenosylcobalamin from cob(II)yrinate a,c-diamide: step 7/7. Joins adenosylcobinamide-GDP and alpha-ribazole to generate adenosylcobalamin (Ado-cobalamin). Also synthesizes adenosylcobalamin 5'-phosphate from adenosylcobinamide-GDP and alpha-ribazole 5'-phosphate. In Thermoplasma acidophilum (strain ATCC 25905 / DSM 1728 / JCM 9062 / NBRC 15155 / AMRC-C165), this protein is Adenosylcobinamide-GDP ribazoletransferase.